Here is a 1032-residue protein sequence, read N- to C-terminus: Protein translocase subunit SecA (1032 aa).

ATP-binding positions include Q121, 139 to 143, and D570; that span reads GEGKT. Residues 945–975 form a disordered region; the sequence is TAGGSENATEDAPKPAKRGVGGAARRVSNAA. 4 residues coordinate Zn(2+): C994, C996, C1005, and H1006.

Belongs to the SecA family. Monomer and homodimer. Part of the essential Sec protein translocation apparatus which comprises SecA, SecYEG and auxiliary proteins SecDF. Other proteins may also be involved. The cofactor is Zn(2+).

It is found in the cell membrane. The protein resides in the cytoplasm. The enzyme catalyses ATP + H2O + cellular proteinSide 1 = ADP + phosphate + cellular proteinSide 2.. Functionally, part of the Sec protein translocase complex. Interacts with the SecYEG preprotein conducting channel. Has a central role in coupling the hydrolysis of ATP to the transfer of proteins into and across the cell membrane, serving as an ATP-driven molecular motor driving the stepwise translocation of polypeptide chains across the membrane. In Herpetosiphon aurantiacus (strain ATCC 23779 / DSM 785 / 114-95), this protein is Protein translocase subunit SecA.